Reading from the N-terminus, the 273-residue chain is Ribosomal RNA small subunit methyltransferase A (273 aa).

S-adenosyl-L-methionine-binding residues include asparagine 19, leucine 21, glycine 46, glutamate 71, aspartate 94, and asparagine 117.

It belongs to the class I-like SAM-binding methyltransferase superfamily. rRNA adenine N(6)-methyltransferase family. RsmA subfamily.

It is found in the cytoplasm. It carries out the reaction adenosine(1518)/adenosine(1519) in 16S rRNA + 4 S-adenosyl-L-methionine = N(6)-dimethyladenosine(1518)/N(6)-dimethyladenosine(1519) in 16S rRNA + 4 S-adenosyl-L-homocysteine + 4 H(+). Specifically dimethylates two adjacent adenosines (A1518 and A1519) in the loop of a conserved hairpin near the 3'-end of 16S rRNA in the 30S particle. May play a critical role in biogenesis of 30S subunits. The sequence is that of Ribosomal RNA small subunit methyltransferase A from Burkholderia ambifaria (strain MC40-6).